The sequence spans 522 residues: Peptide chain release factor 3 (522 aa).

A tr-type G domain is found at 10–277 (ASRKTFAIIS…TFVDFAPSPS (268 aa)). Residues 19 to 26 (SHPDAGKT), 87 to 91 (DTPGH), and 141 to 144 (NKMD) contribute to the GTP site.

It belongs to the TRAFAC class translation factor GTPase superfamily. Classic translation factor GTPase family. PrfC subfamily.

The protein resides in the cytoplasm. Increases the formation of ribosomal termination complexes and stimulates activities of RF-1 and RF-2. It binds guanine nucleotides and has strong preference for UGA stop codons. It may interact directly with the ribosome. The stimulation of RF-1 and RF-2 is significantly reduced by GTP and GDP, but not by GMP. The protein is Peptide chain release factor 3 of Listeria innocua serovar 6a (strain ATCC BAA-680 / CLIP 11262).